Consider the following 583-residue polypeptide: Afadin- and alpha-actinin-binding protein (583 aa).

3 coiled-coil regions span residues 108–220, 255–333, and 420–453; these read NNVE…LAIE, DYEA…QLTN, and EEKE…AIRL. The interval 285 to 328 is disordered; that stretch reads LSPCPPLNRGGSAEESQELGDSDREERSAETSRETLDQSCEHAR. The span at 305–328 shows a compositional bias: basic and acidic residues; sequence DSDREERSAETSRETLDQSCEHAR. The segment at 480-527 is disordered; the sequence is DRMRSSSSDGQSALSVKSEPEIRTSSSKAPPVKSSAYTTFSTPKSSKS. Residues 484-494 are compositionally biased toward polar residues; sequence SSSSDGQSALS. The span at 504–515 shows a compositional bias: low complexity; the sequence is SSSKAPPVKSSA. Over residues 516–527 the composition is skewed to polar residues; the sequence is YTTFSTPKSSKS.

It belongs to the ADIP family.

Its subcellular location is the cell junction. It localises to the adherens junction. The protein resides in the cytoplasm. It is found in the cytoskeleton. The protein localises to the microtubule organizing center. Its subcellular location is the centrosome. It localises to the centriolar satellite. Belongs to an adhesion system, which plays a role in the organization of homotypic, interneuronal and heterotypic cell-cell adherens junctions (AJs). Involved in cell movement. Acts as a centrosome maturation factor, probably by maintaining the integrity of the pericentriolar material and proper microtubule nucleation at mitotic spindle poles. This chain is Afadin- and alpha-actinin-binding protein (ssx2ip), found in Oryzias latipes (Japanese rice fish).